The sequence spans 239 residues: MALRAEYENSADIGVFTKLTNKYCITAPGGSSSYKIIEQEVSPKIPCVEATIGGLRIIGRLAVGNRKGLLLPNTCNDQELLHLRNSLPDDVVVQRVEERMSALGNCIACNDYVALVHPEIDRETEEIIADVLGVEVFRHAVGGNPLVGTYSVITNKGAMLAPNTTQQEQEEIGTILQVPLVAGTVNRGSNLLGSGMIVNDWCGFVGMDTTATELSIVEGIYKLRNETDVQFASVMELMK.

The protein belongs to the eIF-6 family. Monomer. Associates with the 60S ribosomal subunit.

It localises to the cytoplasm. The protein localises to the nucleus. Its subcellular location is the nucleolus. Functionally, binds to the 60S ribosomal subunit and prevents its association with the 40S ribosomal subunit to form the 80S initiation complex in the cytoplasm. May also be involved in ribosome biogenesis. The polypeptide is Eukaryotic translation initiation factor 6 (Entamoeba dispar (strain ATCC PRA-260 / SAW760)).